A 250-amino-acid chain; its full sequence is GILT-like protein 1 (250 aa).

The signal sequence occupies residues 1–21 (MSHKIAAVCLLMSCLIATAYS). Residue Asn-157 is glycosylated (N-linked (GlcNAc...) asparagine).

It belongs to the GILT family. In terms of processing, conjugated to URM1, a ubiquitin-like protein.

Its subcellular location is the secreted. Its function is as follows. Involved in the immune response to bacterial infection. The chain is GILT-like protein 1 from Drosophila melanogaster (Fruit fly).